A 320-amino-acid polypeptide reads, in one-letter code: Pyrroline-5-carboxylate reductase 2 (320 aa).

Position 2 is an N-acetylserine (Ser2). NADP(+) contacts are provided by residues 6-11 and Ser34; that span reads IGAGQL. NADPH contacts are provided by Ala8, Gln10, Leu11, Ser34, Glu36, Asn56, Val70, Lys71, and Ala97. NADP(+) is bound by residues Asn56, 69–72, and 95–97; these read AVKP and CAA. Residue Glu164 coordinates L-proline. Asn230 is a binding site for NADPH. Ala237 and Thr238 together coordinate L-proline. Residues 295–305 show a composition bias toward low complexity; the sequence is PTVSTLTPSSP. The segment at 295–320 is disordered; sequence PTVSTLTPSSPGKLLTRSLALGGKKD. The residue at position 304 (Ser304) is a Phosphoserine.

Belongs to the pyrroline-5-carboxylate reductase family. Homodecamer; composed of 5 homodimers. Interacts with LTO1. In terms of tissue distribution, detected in erythrocytes (at protein level). Expressed in fetal brain.

The protein resides in the cytoplasm. The protein localises to the mitochondrion. The enzyme catalyses L-proline + NADP(+) = (S)-1-pyrroline-5-carboxylate + NADPH + 2 H(+). It catalyses the reaction L-proline + NAD(+) = (S)-1-pyrroline-5-carboxylate + NADH + 2 H(+). Its pathway is amino-acid biosynthesis; L-proline biosynthesis; L-proline from L-glutamate 5-semialdehyde: step 1/1. Subject to competitive inhibition by NADP. Was reported not to be inhibited by proline. However other study demonstrated an inhibition by proline. Functionally, oxidoreductase that catalyzes the last step in proline biosynthesis, which corresponds to the reduction of pyrroline-5-carboxylate to L-proline using NAD(P)H. At physiologic concentrations, has higher specific activity in the presence of NADH. Involved in cellular response to oxidative stress. In some cell types, such as erythrocytes, its primary function may be the generation of NADP(+). The polypeptide is Pyrroline-5-carboxylate reductase 2 (Homo sapiens (Human)).